The following is a 328-amino-acid chain: YDG domain-containing protein At5g47150 (328 aa).

The YDG domain maps to 176–320 (GSVPGINIGD…KSVYKFKLCR (145 aa)).

The protein localises to the nucleus. This chain is YDG domain-containing protein At5g47150, found in Arabidopsis thaliana (Mouse-ear cress).